Consider the following 427-residue polypeptide: MLDIKWIRENPELLDQALAKRGAEPLSQSLIALDEQRRAVVQDMQDMQSRRNSASKEIGAAMAQKDMALAEKLKAEVASLKDTLPAAEEDERRLSAELTDALSRIPNIPLDDVPVGADEHDNVVARVVGQKPGWNHTAIEHPEIGEALGYMDFDRAAKLSGARFTVLTGPLARLERALGQFMIDLHTSEHGYTEVSSPLMVRDEAMYGTGQLPKFSEELFKTTDGRWLIPTAEVTLTNLVSGEILDQEKLPLRFTALTPSFRSEAGSAGRDTRGMLRQHQFWKCELVSITDAQSALAEHERMTACAEEVLKRLGLHFRTMTLCTGDMGFGAAKTYDLEVWLPGQNTFREISSCSVCGDFQGRRMNARYRNKDGKGTTFVHTLNGSGTAVGRCLIAVMENYLNEDGSITVPDVLLPYMGGLTRIEKAS.

Residue 231 to 233 (TAE) participates in L-serine binding. 262–264 (RSE) contributes to the ATP binding site. L-serine is bound at residue glutamate 285. 349–352 (EISS) provides a ligand contact to ATP. Serine 385 is an L-serine binding site.

It belongs to the class-II aminoacyl-tRNA synthetase family. Type-1 seryl-tRNA synthetase subfamily. In terms of assembly, homodimer. The tRNA molecule binds across the dimer.

The protein resides in the cytoplasm. It carries out the reaction tRNA(Ser) + L-serine + ATP = L-seryl-tRNA(Ser) + AMP + diphosphate + H(+). The catalysed reaction is tRNA(Sec) + L-serine + ATP = L-seryl-tRNA(Sec) + AMP + diphosphate + H(+). Its pathway is aminoacyl-tRNA biosynthesis; selenocysteinyl-tRNA(Sec) biosynthesis; L-seryl-tRNA(Sec) from L-serine and tRNA(Sec): step 1/1. Catalyzes the attachment of serine to tRNA(Ser). Is also able to aminoacylate tRNA(Sec) with serine, to form the misacylated tRNA L-seryl-tRNA(Sec), which will be further converted into selenocysteinyl-tRNA(Sec). This is Serine--tRNA ligase from Allorhizobium ampelinum (strain ATCC BAA-846 / DSM 112012 / S4) (Agrobacterium vitis (strain S4)).